The sequence spans 209 residues: Large ribosomal subunit protein bL21m (209 aa).

The transit peptide at 1–43 directs the protein to the mitochondrion; sequence MAAAIAASALPGAFGRLVSVCSRSILASQGSGSASLWSASRRF.

It belongs to the bacterial ribosomal protein bL21 family. As to quaternary structure, component of the mitochondrial ribosome large subunit (39S) which comprises a 16S rRNA and about 50 distinct proteins.

The protein resides in the mitochondrion. This chain is Large ribosomal subunit protein bL21m (Mrpl21), found in Mus musculus (Mouse).